The following is a 179-amino-acid chain: Inner membrane-spanning protein YciB (179 aa).

The next 5 membrane-spanning stretches (helical) occupy residues 22 to 42 (IYAA…YSWV), 50 to 70 (MALI…FFHN), 76 to 96 (WKVT…QWVM), 121 to 141 (LAWA…AFWL), and 149 to 169 (FKVF…GIYI).

It belongs to the YciB family.

The protein resides in the cell inner membrane. Its function is as follows. Plays a role in cell envelope biogenesis, maintenance of cell envelope integrity and membrane homeostasis. In Shigella boydii serotype 4 (strain Sb227), this protein is Inner membrane-spanning protein YciB.